Reading from the N-terminus, the 314-residue chain is MNQLSESYKVRLSKLVPGSVAFFQYLLKRMTHDRVNVNAGYLAYITLLSIVPMLTVLLSILSKFPVFENVGETLQGYIIDNFVPASGDAVRTALQEFVSNTGKMTAVGGAFLFVAALMLISNIDKNLNYIWRVKDKRRPVFSFSMYWMVLTLGPILVGASIAVTSYVTSLKLIENETLTGAYNLFLRWLPLLLSFFAFMGLYFLVPNKKVYLSHGAIGAAIAAVLFELSKKGFAFYITQFPSYQLIYGALAAIPILFVWVYLCWLIVLIGAEVTAALGEREHWSDDLEMIHSTAELQLTDEGSESRDSANSTSQ.

Transmembrane regions (helical) follow at residues 41–61 (YLAY…LSIL), 104–124 (MTAV…SNID), 143–163 (FSMY…SIAV), 185–205 (FLRW…YFLV), 217–237 (IGAA…AFYI), and 249–269 (ALAA…IVLI).

The protein belongs to the UPF0761 family.

The protein localises to the cell inner membrane. The protein is UPF0761 membrane protein VIBHAR_00593 of Vibrio campbellii (strain ATCC BAA-1116).